Consider the following 122-residue polypeptide: Small ribosomal subunit protein bS6 (122 aa).

A disordered region spans residues 95 to 122; the sequence is AETAPSPMMKEVQREEAKKAAAQSEQAA.

This sequence belongs to the bacterial ribosomal protein bS6 family.

Binds together with bS18 to 16S ribosomal RNA. The polypeptide is Small ribosomal subunit protein bS6 (Ralstonia nicotianae (strain ATCC BAA-1114 / GMI1000) (Ralstonia solanacearum)).